A 264-amino-acid polypeptide reads, in one-letter code: Tryptophan synthase alpha chain (264 aa).

Catalysis depends on proton acceptor residues glutamate 45 and aspartate 56.

This sequence belongs to the TrpA family. In terms of assembly, tetramer of two alpha and two beta chains.

The catalysed reaction is (1S,2R)-1-C-(indol-3-yl)glycerol 3-phosphate + L-serine = D-glyceraldehyde 3-phosphate + L-tryptophan + H2O. The protein operates within amino-acid biosynthesis; L-tryptophan biosynthesis; L-tryptophan from chorismate: step 5/5. Its function is as follows. The alpha subunit is responsible for the aldol cleavage of indoleglycerol phosphate to indole and glyceraldehyde 3-phosphate. This chain is Tryptophan synthase alpha chain, found in Leptospira interrogans serogroup Icterohaemorrhagiae serovar copenhageni (strain Fiocruz L1-130).